A 225-amino-acid chain; its full sequence is Uridylate kinase (225 aa).

G9–S10 contributes to the ATP binding site. Residue G43 participates in UMP binding. Residues G44 and R48 each coordinate ATP. UMP is bound by residues D65 and T113–T119. Residues T139, Y145, and D148 each contribute to the ATP site.

This sequence belongs to the UMP kinase family. As to quaternary structure, homohexamer.

It is found in the cytoplasm. It carries out the reaction UMP + ATP = UDP + ADP. Its pathway is pyrimidine metabolism; CTP biosynthesis via de novo pathway; UDP from UMP (UMPK route): step 1/1. Inhibited by UTP. Its function is as follows. Catalyzes the reversible phosphorylation of UMP to UDP. This chain is Uridylate kinase, found in Methanobrevibacter smithii (strain ATCC 35061 / DSM 861 / OCM 144 / PS).